The chain runs to 504 residues: Maturase K (504 aa).

Belongs to the intron maturase 2 family. MatK subfamily.

Its subcellular location is the plastid. It is found in the chloroplast. Its function is as follows. Usually encoded in the trnK tRNA gene intron. Probably assists in splicing its own and other chloroplast group II introns. The chain is Maturase K from Fagus japonica (Japanese beech).